The chain runs to 476 residues: Glutamate--tRNA ligase 1 (476 aa).

Residues 9–19 carry the 'HIGH' region motif; the sequence is PSPTGFLHIGG. Positions 238-242 match the 'KMSKS' region motif; the sequence is KLSKR. K241 is an ATP binding site.

Belongs to the class-I aminoacyl-tRNA synthetase family. Glutamate--tRNA ligase type 1 subfamily. Monomer.

The protein localises to the cytoplasm. It carries out the reaction tRNA(Glu) + L-glutamate + ATP = L-glutamyl-tRNA(Glu) + AMP + diphosphate. Functionally, catalyzes the attachment of glutamate to tRNA(Glu) in a two-step reaction: glutamate is first activated by ATP to form Glu-AMP and then transferred to the acceptor end of tRNA(Glu). The protein is Glutamate--tRNA ligase 1 of Bartonella bacilliformis (strain ATCC 35685 / KC583 / Herrer 020/F12,63).